The following is a 340-amino-acid chain: Anthranilate phosphoribosyltransferase (340 aa).

Residues Gly79, 82-83, Ser87, 89-92, 107-115, and Ser119 each bind 5-phospho-alpha-D-ribose 1-diphosphate; these read GD, NIST, and KHGNRSVSS. Residue Gly79 participates in anthranilate binding. A Mg(2+)-binding site is contributed by Ser91. An anthranilate-binding site is contributed by Asn110. Arg165 lines the anthranilate pocket. The Mg(2+) site is built by Asp224 and Glu225.

The protein belongs to the anthranilate phosphoribosyltransferase family. In terms of assembly, homodimer. Requires Mg(2+) as cofactor.

It carries out the reaction N-(5-phospho-beta-D-ribosyl)anthranilate + diphosphate = 5-phospho-alpha-D-ribose 1-diphosphate + anthranilate. It functions in the pathway amino-acid biosynthesis; L-tryptophan biosynthesis; L-tryptophan from chorismate: step 2/5. In terms of biological role, catalyzes the transfer of the phosphoribosyl group of 5-phosphorylribose-1-pyrophosphate (PRPP) to anthranilate to yield N-(5'-phosphoribosyl)-anthranilate (PRA). This Oceanobacillus iheyensis (strain DSM 14371 / CIP 107618 / JCM 11309 / KCTC 3954 / HTE831) protein is Anthranilate phosphoribosyltransferase.